Here is a 694-residue protein sequence, read N- to C-terminus: Probable methyltransferase PMT11 (694 aa).

Residues 1–14 are Cytoplasmic-facing; sequence MKPLTNGDLFKSPT. A helical; Signal-anchor for type II membrane protein membrane pass occupies residues 15-32; the sequence is LIKISALVFVTVAFFYLG. Residues 33–694 are Lumenal-facing; the sequence is KHWSDDGYQQ…LTCEKRLLRA (662 aa). N-linked (GlcNAc...) asparagine glycans are attached at residues Asn-69 and Asn-77. A disordered region spans residues 83-128; sequence IPATIRQQPPSVVADTEKVKVEANPPPPPPPSPSPPPPPGPVKSFG. Residues 106 to 123 show a composition bias toward pro residues; it reads NPPPPPPPSPSPPPPPGP. Residues Asn-155, Asn-378, and Asn-423 are each glycosylated (N-linked (GlcNAc...) asparagine).

This sequence belongs to the methyltransferase superfamily.

Its subcellular location is the golgi apparatus membrane. This chain is Probable methyltransferase PMT11, found in Arabidopsis thaliana (Mouse-ear cress).